The sequence spans 215 residues: Virulence protein YscR (215 aa).

The next 4 membrane-spanning stretches (helical) occupy residues 10–30, 53–73, 156–176, and 188–208; these read LIGILFLLSILPLIIVMGTSF, IALYGLALVLSLFIMGPTLLA, IGLLIYLPFLAIDLLISNILL, and ISLPFKLLIFLLAGGWDLTLA.

The protein belongs to the FliP/MopC/SpaP family.

Its subcellular location is the cell membrane. In Salmonella typhimurium (strain LT2 / SGSC1412 / ATCC 700720), this protein is Virulence protein YscR (yscR).